Here is a 174-residue protein sequence, read N- to C-terminus: NADH-quinone oxidoreductase subunit C (174 aa).

Belongs to the complex I 30 kDa subunit family. In terms of assembly, NDH-1 is composed of 14 different subunits. Subunits NuoB, C, D, E, F, and G constitute the peripheral sector of the complex.

The protein resides in the cell membrane. The enzyme catalyses a quinone + NADH + 5 H(+)(in) = a quinol + NAD(+) + 4 H(+)(out). In terms of biological role, NDH-1 shuttles electrons from NADH, via FMN and iron-sulfur (Fe-S) centers, to quinones in the respiratory chain. The immediate electron acceptor for the enzyme in this species is believed to be ubiquinone. Couples the redox reaction to proton translocation (for every two electrons transferred, four hydrogen ions are translocated across the cytoplasmic membrane), and thus conserves the redox energy in a proton gradient. The polypeptide is NADH-quinone oxidoreductase subunit C (Roseiflexus castenholzii (strain DSM 13941 / HLO8)).